The following is a 223-amino-acid chain: Neurotrophic factor BDNF precursor form (223 aa).

The signal sequence occupies residues 1 to 5 (SCMKA). The propeptide occupies 6–114 (APMKEVSIRG…AANMSMRVRR (109 aa)). Residue Asn-107 is glycosylated (N-linked (GlcNAc...) asparagine). 2 cysteine pairs are disulfide-bonded: Cys-127–Cys-194 and Cys-172–Cys-223.

It belongs to the NGF-beta family.

The protein localises to the secreted. Its function is as follows. Promotes the survival of neuronal populations that are all located either in the central nervous system or directly connected to it. This chain is Neurotrophic factor BDNF precursor form (BDNF), found in Candoia carinata (Papuan tree boa).